A 156-amino-acid chain; its full sequence is MSESAERKSILDVVGIQKLLPHRPPFLLVDRVVEFEAHRRLVALKGVTMNEPFFQGHFPAQPVMPGVLILEALAQAAALLATMSLQPDEVKDKITYLMGIDGARFRRPVVPGDRLELEVEVTKQKGAVWKQTGVARVDGQVVAEAEFMAMLADRER.

His57 is a catalytic residue.

This sequence belongs to the thioester dehydratase family. FabZ subfamily.

Its subcellular location is the cytoplasm. The enzyme catalyses a (3R)-hydroxyacyl-[ACP] = a (2E)-enoyl-[ACP] + H2O. Its function is as follows. Involved in unsaturated fatty acids biosynthesis. Catalyzes the dehydration of short chain beta-hydroxyacyl-ACPs and long chain saturated and unsaturated beta-hydroxyacyl-ACPs. The polypeptide is 3-hydroxyacyl-[acyl-carrier-protein] dehydratase FabZ (Anaeromyxobacter dehalogenans (strain 2CP-1 / ATCC BAA-258)).